A 1196-amino-acid polypeptide reads, in one-letter code: Beta/alpha-amylase (1196 aa).

The N-terminal stretch at 1–35 (MTLYRSLWKKGCMLLLSLVLSLTAFIGSPSNTASA) is a signal peptide. Positions 36-454 (AVADDFQASV…IISKAKPDNN (419 aa)) are beta-amylase. Asp76 provides a ligand contact to substrate. Ca(2+)-binding residues include Glu83 and Asp87. Residues His116 and Asp124 each coordinate substrate. A disulfide bridge links Cys118 with Cys126. Glu170 contacts Ca(2+). Catalysis depends on Glu198, which acts as the Proton donor. Substrate-binding residues include Lys314, His319, and Thr357. The active-site Proton acceptor is Glu394. Substrate contacts are provided by residues 395–396 (NA) and Arg423. 2 repeats span residues 455–558 (GGTG…APAG) and 565–668 (GGTT…APSG). Over residues 544-553 (NSGNAGTITS) the composition is skewed to polar residues. Residues 544–566 (NSGNAGTITSGAPAGANPGDGGG) are disordered. The alpha-amylase stretch occupies residues 669 to 1196 (SVLSVVTSTY…APKEVKVFTK (528 aa)).

It in the N-terminal section; belongs to the glycosyl hydrolase 14 family. In the C-terminal section; belongs to the glycosyl hydrolase 13 family. Ca(2+) serves as cofactor.

It localises to the secreted. It catalyses the reaction Hydrolysis of (1-&gt;4)-alpha-D-glucosidic linkages in polysaccharides so as to remove successive maltose units from the non-reducing ends of the chains.. The enzyme catalyses Endohydrolysis of (1-&gt;4)-alpha-D-glucosidic linkages in polysaccharides containing three or more (1-&gt;4)-alpha-linked D-glucose units.. Functionally, the precursor protein is proteolytically cleaved to produce multiform beta-amylases and a 48 kDa alpha-amylase after secretion. This is Beta/alpha-amylase from Paenibacillus polymyxa (Bacillus polymyxa).